The following is a 101-amino-acid chain: Protein Tat (101 aa).

Residues 1-20 (MEPVDPSLEPWKHPGSQPKT) are disordered. The interaction with human CREBBP stretch occupies residues 1-24 (MEPVDPSLEPWKHPGSQPKTACTN). The transactivation stretch occupies residues 1–48 (MEPVDPSLEPWKHPGSQPKTACTNCYCKKCCLHCQVCFTTKGLGISYG). Residues Cys22, Cys25, and Cys27 each coordinate Zn(2+). The cysteine-rich stretch occupies residues 22–37 (CTNCYCKKCCLHCQVC). Lys28 carries the post-translational modification N6-acetyllysine; by host PCAF. The Zn(2+) site is built by Cys30, His33, Cys34, and Cys37. The tract at residues 38–48 (FTTKGLGISYG) is core. A disordered region spans residues 45-101 (ISYGRKKRRQRRRPPQDSQTHQVSLPKQPSSQQRGDPTGPKESKKKVERETETDPDN). Residues 48 to 57 (GRKKRRQRRR) are compositionally biased toward basic residues. A Nuclear localization signal, RNA-binding (TAR), and protein transduction motif is present at residues 49 to 57 (RKKRRQRRR). Residues 49–86 (RKKRRQRRRPPQDSQTHQVSLPKQPSSQQRGDPTGPKE) are interaction with the host capping enzyme RNGTT. N6-acetyllysine; by host EP300 and GCN5L2 occurs at positions 50 and 51. Asymmetric dimethylarginine; by host PRMT6 occurs at positions 52 and 53. The segment covering 61 to 79 (DSQTHQVSLPKQPSSQQRG) has biased composition (polar residues). Residue Lys71 forms a Glycyl lysine isopeptide (Lys-Gly) (interchain with G-Cter in ubiquitin) linkage. A Cell attachment site motif is present at residues 78–80 (RGD). Residues 83 to 101 (GPKESKKKVERETETDPDN) are compositionally biased toward basic and acidic residues.

It belongs to the lentiviruses Tat family. Interacts with host CCNT1. Associates with the P-TEFb complex composed at least of Tat, P-TEFb (CDK9 and CCNT1), TAR RNA, RNA Pol II. Recruits the HATs CREBBP, TAF1/TFIID, EP300, PCAF and GCN5L2. Interacts with host KAT5/Tip60; this interaction targets the latter to degradation. Interacts with the host deacetylase SIRT1. Interacts with host capping enzyme RNGTT; this interaction stimulates RNGTT. Binds to host KDR, and to the host integrins ITGAV/ITGB3 and ITGA5/ITGB1. Interacts with host KPNB1/importin beta-1 without previous binding to KPNA1/importin alpha-1. Interacts with EIF2AK2. Interacts with host nucleosome assembly protein NAP1L1; this interaction may be required for the transport of Tat within the nucleus, since the two proteins interact at the nuclear rim. Interacts with host C1QBP/SF2P32; this interaction involves lysine-acetylated Tat. Interacts with the host chemokine receptors CCR2, CCR3 and CXCR4. Interacts with host DPP4/CD26; this interaction may trigger an anti-proliferative effect. Interacts with host LDLR. Interacts with the host extracellular matrix metalloproteinase MMP1. Interacts with host PRMT6; this interaction mediates Tat's methylation. Interacts with, and is ubiquitinated by MDM2/Hdm2. Interacts with host PSMC3 and HTATIP2. Interacts with STAB1; this interaction may overcome SATB1-mediated repression of IL2 and IL2RA (interleukin) in T cells by binding to the same domain than HDAC1. Interacts (when acetylated) with human CDK13, thereby increasing HIV-1 mRNA splicing and promoting the production of the doubly spliced HIV-1 protein Nef. Interacts with host TBP; this interaction modulates the activity of transcriptional pre-initiation complex. Interacts with host RELA. Interacts with host PLSCR1; this interaction negatively regulates Tat transactivation activity by altering its subcellular distribution. Asymmetrical arginine methylation by host PRMT6 seems to diminish the transactivation capacity of Tat and affects the interaction with host CCNT1. In terms of processing, acetylation by EP300, CREBBP, GCN5L2/GCN5 and PCAF regulates the transactivation activity of Tat. EP300-mediated acetylation of Lys-50 promotes dissociation of Tat from the TAR RNA through the competitive binding to PCAF's bromodomain. In addition, the non-acetylated Tat's N-terminus can also interact with PCAF. PCAF-mediated acetylation of Lys-28 enhances Tat's binding to CCNT1. Lys-50 is deacetylated by SIRT1. Post-translationally, polyubiquitination by host MDM2 does not target Tat to degradation, but activates its transactivation function and fosters interaction with CCNT1 and TAR RNA. Phosphorylated by EIF2AK2 on serine and threonine residues adjacent to the basic region important for TAR RNA binding and function. Phosphorylation of Tat by EIF2AK2 is dependent on the prior activation of EIF2AK2 by dsRNA.

The protein localises to the host nucleus. It is found in the host nucleolus. The protein resides in the host cytoplasm. It localises to the secreted. Functionally, transcriptional activator that increases RNA Pol II processivity, thereby increasing the level of full-length viral transcripts. Recognizes a hairpin structure at the 5'-LTR of the nascent viral mRNAs referred to as the transactivation responsive RNA element (TAR) and recruits the cyclin T1-CDK9 complex (P-TEFb complex) that will in turn hyperphosphorylate the RNA polymerase II to allow efficient elongation. The CDK9 component of P-TEFb and other Tat-activated kinases hyperphosphorylate the C-terminus of RNA Pol II that becomes stabilized and much more processive. Other factors such as HTATSF1/Tat-SF1, SUPT5H/SPT5, and HTATIP2 are also important for Tat's function. Besides its effect on RNA Pol II processivity, Tat induces chromatin remodeling of proviral genes by recruiting the histone acetyltransferases (HATs) CREBBP, EP300 and PCAF to the chromatin. This also contributes to the increase in proviral transcription rate, especially when the provirus integrates in transcriptionally silent region of the host genome. To ensure maximal activation of the LTR, Tat mediates nuclear translocation of NF-kappa-B by interacting with host RELA. Through its interaction with host TBP, Tat may also modulate transcription initiation. Tat can reactivate a latently infected cell by penetrating in it and transactivating its LTR promoter. In the cytoplasm, Tat is thought to act as a translational activator of HIV-1 mRNAs. Its function is as follows. Extracellular circulating Tat can be endocytosed by surrounding uninfected cells via the binding to several surface receptors such as CD26, CXCR4, heparan sulfate proteoglycans (HSPG) or LDLR. Neurons are rarely infected, but they internalize Tat via their LDLR. Through its interaction with nuclear HATs, Tat is potentially able to control the acetylation-dependent cellular gene expression. Modulates the expression of many cellular genes involved in cell survival, proliferation or in coding for cytokines or cytokine receptors. Tat plays a role in T-cell and neurons apoptosis. Tat induced neurotoxicity and apoptosis probably contribute to neuroAIDS. Circulating Tat also acts as a chemokine-like and/or growth factor-like molecule that binds to specific receptors on the surface of the cells, affecting many cellular pathways. In the vascular system, Tat binds to ITGAV/ITGB3 and ITGA5/ITGB1 integrins dimers at the surface of endothelial cells and competes with bFGF for heparin-binding sites, leading to an excess of soluble bFGF. The polypeptide is Protein Tat (Homo sapiens (Human)).